Here is a 763-residue protein sequence, read N- to C-terminus: Amine oxidase [copper-containing] 3 (763 aa).

Topologically, residues 1–6 (MNQKTT) are cytoplasmic. The chain crosses the membrane as a helical; Signal-anchor for type II membrane protein span at residues 7 to 27 (LVLLALAVITIFALVCVLIAG). The Extracellular portion of the chain corresponds to 28–763 (RGGDGGEASQ…AFSHGGFFTN (736 aa)). A glycan (N-linked (GlcNAc...) asparagine) is linked at Asn137. Cys198 and Cys199 are disulfide-bonded. 2 N-linked (GlcNAc...) asparagine glycosylation sites follow: Asn232 and Asn294. Residue Asp386 is the Proton acceptor of the active site. A disulfide bridge links Cys404 with Cys430. The Schiff-base intermediate with substrate; via topaquinone role is filled by Tyr471. Tyr471 bears the 2',4',5'-topaquinone mark. His520 and His522 together coordinate Cu(2+). Asp529, Leu530, Asp531, and Glu572 together coordinate Ca(2+). Asn618 carries an N-linked (GlcNAc...) asparagine glycan. Residues Glu641, Phe663, and Asn665 each coordinate Ca(2+). Asn666 is a glycosylation site (N-linked (GlcNAc...) asparagine). Ca(2+) contacts are provided by Glu667, Asp673, and Leu674. Residue His684 participates in Cu(2+) binding. The cysteines at positions 734 and 741 are disulfide-linked.

The protein belongs to the copper/topaquinone oxidase family. As to quaternary structure, homodimer; disulfide-linked. Probably forms heterodimers with AOC2. It depends on Cu(2+) as a cofactor. Ca(2+) serves as cofactor. The cofactor is L-topaquinone. Topaquinone (TPQ) is generated by copper-dependent autoxidation of a specific tyrosyl residue. In terms of processing, N- and O-glycosylated.

It is found in the cell membrane. It carries out the reaction methylamine + O2 + H2O = formaldehyde + H2O2 + NH4(+). The catalysed reaction is benzylamine + O2 + H2O = benzaldehyde + H2O2 + NH4(+). The enzyme catalyses 2-phenylethylamine + O2 + H2O = 2-phenylacetaldehyde + H2O2 + NH4(+). In terms of biological role, catalyzes the oxidative deamination of primary amines to the corresponding aldehydes with the concomitant production of hydrogen peroxide and ammonia. Has a preference for the primary monoamines methylamine and benzylamine. Could also act on 2-phenylethylamine but much less efficiently. At endothelial cells surface can also function as a cell adhesion protein that participates in lymphocyte extravasation and recirculation by mediating the binding of lymphocytes to peripheral lymph node vascular endothelial cells in an L-selectin-independent fashion. This is Amine oxidase [copper-containing] 3 from Bos taurus (Bovine).